Reading from the N-terminus, the 395-residue chain is Phosphoribulokinase, chloroplastic (395 aa).

Residues 1-46 constitute a chloroplast transit peptide; it reads MAVSTIYSTQALNSTHFLTSSSSSKQVFLYRRQPQTNRRFNTLITC. A disulfide bond links C61 and C100.

It belongs to the phosphoribulokinase family.

It is found in the plastid. The protein localises to the chloroplast. The catalysed reaction is D-ribulose 5-phosphate + ATP = D-ribulose 1,5-bisphosphate + ADP + H(+). It functions in the pathway carbohydrate biosynthesis; Calvin cycle. With respect to regulation, light regulated via thioredoxin by reversible oxidation/reduction of sulfhydryl/disulfide groups. The sequence is that of Phosphoribulokinase, chloroplastic from Arabidopsis thaliana (Mouse-ear cress).